Reading from the N-terminus, the 510-residue chain is D-alanine--D-alanyl carrier protein ligase (510 aa).

157-158 (TS) lines the ATP pocket. Position 202 (Asp-202) interacts with D-alanine. Position 297–302 (297–302 (NTYGPT)) interacts with ATP. Val-306 is a D-alanine binding site. ATP-binding residues include Asp-389 and Lys-498. D-alanine is bound at residue Lys-498.

Belongs to the ATP-dependent AMP-binding enzyme family. DltA subfamily.

It localises to the cytoplasm. The catalysed reaction is holo-[D-alanyl-carrier protein] + D-alanine + ATP = D-alanyl-[D-alanyl-carrier protein] + AMP + diphosphate. Its pathway is cell wall biogenesis; lipoteichoic acid biosynthesis. In terms of biological role, catalyzes the first step in the D-alanylation of lipoteichoic acid (LTA), the activation of D-alanine and its transfer onto the D-alanyl carrier protein (Dcp) DltC. In an ATP-dependent two-step reaction, forms a high energy D-alanyl-AMP intermediate, followed by transfer of the D-alanyl residue as a thiol ester to the phosphopantheinyl prosthetic group of the Dcp. D-alanylation of LTA plays an important role in modulating the properties of the cell wall in Gram-positive bacteria, influencing the net charge of the cell wall. This Listeria welshimeri serovar 6b (strain ATCC 35897 / DSM 20650 / CCUG 15529 / CIP 8149 / NCTC 11857 / SLCC 5334 / V8) protein is D-alanine--D-alanyl carrier protein ligase.